Here is a 362-residue protein sequence, read N- to C-terminus: 3-dehydroquinate synthase (362 aa).

Residues 71–76 (DGEQYK), 105–109 (GVVGD), 129–130 (TT), lysine 142, lysine 151, and 169–172 (CLNT) each bind NAD(+). Residues glutamate 184, histidine 247, and histidine 264 each contribute to the Zn(2+) site.

The protein belongs to the sugar phosphate cyclases superfamily. Dehydroquinate synthase family. Co(2+) serves as cofactor. Zn(2+) is required as a cofactor. The cofactor is NAD(+).

It is found in the cytoplasm. It catalyses the reaction 7-phospho-2-dehydro-3-deoxy-D-arabino-heptonate = 3-dehydroquinate + phosphate. Its pathway is metabolic intermediate biosynthesis; chorismate biosynthesis; chorismate from D-erythrose 4-phosphate and phosphoenolpyruvate: step 2/7. Functionally, catalyzes the conversion of 3-deoxy-D-arabino-heptulosonate 7-phosphate (DAHP) to dehydroquinate (DHQ). The polypeptide is 3-dehydroquinate synthase (Enterobacter sp. (strain 638)).